We begin with the raw amino-acid sequence, 316 residues long: C1GALT1-specific chaperone 1 (316 aa).

The Cytoplasmic segment spans residues 1 to 6; it reads MLSESS. Residues 7–26 form a helical; Signal-anchor for type II membrane protein membrane-spanning segment; it reads SFLKGVMLGSIFCALITMLG. The Lumenal portion of the chain corresponds to 27 to 316; sequence HIRIGNRMHH…FLPPNGSEND (290 aa).

It belongs to the glycosyltransferase 31 family. Beta3-Gal-T subfamily. In terms of assembly, associates with core 1 beta-3-galactosyltransferase (C1GALT1), probably not with the soluble active form.

It is found in the membrane. In terms of biological role, probable chaperone required for the generation of 1 O-glycan Gal-beta1-3GalNAc-alpha1-Ser/Thr (T antigen), which is a precursor for many extended O-glycans in glycoproteins. Probably acts as a specific molecular chaperone assisting the folding/stability of core 1 beta-3-galactosyltransferase (C1GALT1). This Mus musculus (Mouse) protein is C1GALT1-specific chaperone 1 (C1galt1c1).